A 339-amino-acid chain; its full sequence is Methylthioribose-1-phosphate isomerase (339 aa).

Residues 50 to 52, Arg-84, and Gln-186 each bind substrate; that span reads RGA. Asp-227 acts as the Proton donor in catalysis. Residue 237 to 238 participates in substrate binding; the sequence is NK.

It belongs to the eIF-2B alpha/beta/delta subunits family. MtnA subfamily.

It carries out the reaction 5-(methylsulfanyl)-alpha-D-ribose 1-phosphate = 5-(methylsulfanyl)-D-ribulose 1-phosphate. The protein operates within amino-acid biosynthesis; L-methionine biosynthesis via salvage pathway; L-methionine from S-methyl-5-thio-alpha-D-ribose 1-phosphate: step 1/6. Its function is as follows. Catalyzes the interconversion of methylthioribose-1-phosphate (MTR-1-P) into methylthioribulose-1-phosphate (MTRu-1-P). The chain is Methylthioribose-1-phosphate isomerase from Sulfurihydrogenibium sp. (strain YO3AOP1).